Reading from the N-terminus, the 439-residue chain is Eukaryotic translation initiation factor 2 subunit gamma (439 aa).

A tr-type G domain is found at 11–215 (QATLNIGTIG…FIVNYIPEPV (205 aa)). The interval 20 to 27 (GHVAHGKS) is G1. Residue 23-28 (AHGKST) participates in GTP binding. Residues 48-52 (NITIK) are G2. The G3 stretch occupies residues 103–106 (DCPG). Residues 159–162 (NKID) and 193–195 (AAQ) contribute to the GTP site. Residues 159 to 162 (NKID) are G4. Residues 193 to 195 (AAQ) are G5. The interacts with CDC123 stretch occupies residues 415-427 (GEIKDGTCIEPEY).

This sequence belongs to the TRAFAC class translation factor GTPase superfamily. Classic translation factor GTPase family. EIF2G subfamily. Eukaryotic translation initiation factor 2 eIF2 is a heterotrimeric complex composed of an alpha, a beta and a gamma subunit. The factors eIF-1, eIF-2, eIF-3, TIF5/eIF-5 and methionyl-tRNAi form a multifactor complex (MFC) that may bind to the 40S ribosome.

It localises to the cytoplasm. It is found in the cytosol. It catalyses the reaction GTP + H2O = GDP + phosphate + H(+). In terms of biological role, as a subunit of eukaryotic initiation factor 2 eIF2, involved in the early steps of protein synthesis. In the presence of GTP, eIF-2 forms a ternary complex with initiator tRNA Met-tRNAi and then recruits the 40S ribosomal complex and initiation factors eIF-1, eIF-1A and eIF-3 to form the 43S pre-initiation complex (43S PIC), a step that determines the rate of protein translation. The 43S PIC binds to mRNA and scans downstream to the initiation codon, where it forms a 48S initiation complex by codon-anticodon base pairing. This leads to the displacement of eIF-1 to allow GTPase-activating protein (GAP) eIF-5-mediated hydrolysis of eIF2-bound GTP. Hydrolysis of GTP and release of Pi, which makes GTP hydrolysis irreversible, causes the release of the eIF-2-GDP binary complex from the 40S subunit, an event that is essential for the subsequent joining of the 60S ribosomal subunit to form an elongation-competent 80S ribosome. In order for eIF-2 to recycle and catalyze another round of initiation, the GDP bound to eIF-2 must be exchanged with GTP by way of a reaction catalyzed by GDP-GTP exchange factor (GEF) eIF-2B. This is Eukaryotic translation initiation factor 2 subunit gamma from Encephalitozoon cuniculi (strain GB-M1) (Microsporidian parasite).